Here is a 312-residue protein sequence, read N- to C-terminus: Protoheme IX farnesyltransferase (312 aa).

9 consecutive transmembrane segments (helical) span residues 31 to 51 (LLMK…GLFI), 58 to 78 (PLLS…AGAI), 107 to 127 (TALT…AICV), 130 to 150 (ISSI…TMWL), 157 to 177 (NIVI…SAVT), 184 to 204 (CLML…TLSL), 229 to 249 (YSIL…YFTD), 250 to 270 (IAGL…LCYA), and 286 to 306 (FKYS…EHCI).

The protein belongs to the UbiA prenyltransferase family. Protoheme IX farnesyltransferase subfamily.

It is found in the cell inner membrane. The enzyme catalyses heme b + (2E,6E)-farnesyl diphosphate + H2O = Fe(II)-heme o + diphosphate. The protein operates within porphyrin-containing compound metabolism; heme O biosynthesis; heme O from protoheme: step 1/1. Converts heme B (protoheme IX) to heme O by substitution of the vinyl group on carbon 2 of heme B porphyrin ring with a hydroxyethyl farnesyl side group. This is Protoheme IX farnesyltransferase from Orientia tsutsugamushi (strain Ikeda) (Rickettsia tsutsugamushi).